The sequence spans 208 residues: Large ribosomal subunit protein uL4 (208 aa).

Residues 50 to 83 (VKTRAEVSGGGRKPWKQKGTGRARQGSIRAPQWK) form a disordered region.

It belongs to the universal ribosomal protein uL4 family. In terms of assembly, part of the 50S ribosomal subunit.

In terms of biological role, one of the primary rRNA binding proteins, this protein initially binds near the 5'-end of the 23S rRNA. It is important during the early stages of 50S assembly. It makes multiple contacts with different domains of the 23S rRNA in the assembled 50S subunit and ribosome. Forms part of the polypeptide exit tunnel. The sequence is that of Large ribosomal subunit protein uL4 from Mycoplasma capricolum subsp. capricolum (strain California kid / ATCC 27343 / NCTC 10154).